A 371-amino-acid polypeptide reads, in one-letter code: Putative glutamate--cysteine ligase 2 (371 aa).

This sequence belongs to the glutamate--cysteine ligase type 2 family. YbdK subfamily.

The catalysed reaction is L-cysteine + L-glutamate + ATP = gamma-L-glutamyl-L-cysteine + ADP + phosphate + H(+). ATP-dependent carboxylate-amine ligase which exhibits weak glutamate--cysteine ligase activity. This is Putative glutamate--cysteine ligase 2 from Cupriavidus pinatubonensis (strain JMP 134 / LMG 1197) (Cupriavidus necator (strain JMP 134)).